The sequence spans 505 residues: ADP-ribosylarginine hydrolase CG2909 (505 aa).

Positions 198, 336, 338, 340, 341, 342, 377, 432, 439, 440, 450, and 451 each coordinate ADP-D-ribose.

It catalyses the reaction N(omega)-(ADP-D-ribosyl)-L-arginyl-[protein] + H2O = ADP-D-ribose + L-arginyl-[protein]. The enzyme catalyses N(omega)-(ADP-D-ribosyl)-L-arginine + H2O = ADP-D-ribose + L-arginine. Its function is as follows. Protein ADP-ribosyl hydrolase that specifically removes mono-ADP-ribosyl modifications from protein arginine residues. This is ADP-ribosylarginine hydrolase CG2909 from Drosophila melanogaster (Fruit fly).